The chain runs to 228 residues: RING1 and YY1-binding protein (228 aa).

Disordered regions lie at residues 1–21 (MTMG…PAAD), 65–156 (QVAQ…RSTA), and 172–228 (DFKE…DESF). A RanBP2-type zinc finger spans residues 21-50 (DEGFWDCSVCTFRNSAEAFKCSICDVRKGT). A compositionally biased stretch (basic and acidic residues) spans 76–98 (PKKEKKEKVEKQDKEKPEKDKEI). Lys-77 participates in a covalent cross-link: Glycyl lysine isopeptide (Lys-Gly) (interchain with G-Cter in SUMO2). Ser-99 bears the Phosphoserine mark. A compositionally biased stretch (basic and acidic residues) spans 113–122 (PKSDILKDPP). 3 positions are modified to phosphoserine: Ser-123, Ser-127, and Ser-130. Residues 124 to 143 (EANSIQSANATTKTSETNHT) are compositionally biased toward polar residues. The interval 143 to 226 (TSRPRLKNVD…KGDMSAVNDE (84 aa)) is interaction with GABPB1 and FANK1. The span at 179-204 (SSSTSSSTVTSSAGSEQQNQSSSGSE) shows a compositional bias: low complexity. The residue at position 227 (Ser-227) is a Phosphoserine.

Monomer. Component of repressive BCOR complex containing Polycomb group subcomplex at least composed of BCOR, PCGF1, RING1 and RNF2/RING2. Component of PCR1-like complexes. Interacts with PCGF1. Part of a PCR1-like complex that contains AUTS2, PCGF5, RNF2, CSNK2B and RYBP. Interacts with RNF2; the interaction is direct. Interacts with CBX2, YAF2, RING1 and RNF2. Interacts with ubiquitin and ubiquitinated proteins. Interacts with ubiquitinated histone H2A. Interacts with apoptin, DEDD, FADD, CASP8, CASP10, YY1 and GABPB1. Together with GABPB1 and YY1, it forms a ternary complex, probably being the bridge factor between these two transcription factors. Interacts with MDM2, and thereby inhibits ubiquitination of TP53. Identified in a ternary complex containing MDM2, TP53 and RYBP. Interacts with FANK1; may prevent the ubiquitin-mediated proteasomal degradation of FANK1. Interacts with IFT57. Monoubiquitinated. As to expression, down-regulated in breast cancer tissues and in several breast cancer cell lines (at protein level). Widely expressed with highest levels in lymphoid tissues and placenta.

It localises to the nucleus. It is found in the cytoplasm. The protein resides in the nucleoplasm. In terms of biological role, component of a Polycomb group (PcG) multiprotein PRC1-like complex, a complex class required to maintain the transcriptionally repressive state of many genes, including Hox genes, throughout development. PcG PRC1-like complex acts via chromatin remodeling and modification of histones; it mediates monoubiquitination of histone H2A 'Lys-119', rendering chromatin heritably changed in its expressibility. Component of a PRC1-like complex that mediates monoubiquitination of histone H2A 'Lys-119' on the X chromosome and is required for normal silencing of one copy of the X chromosome in XX females. May stimulate ubiquitination of histone H2A 'Lys-119' by recruiting the complex to target sites. Inhibits ubiquitination and subsequent degradation of TP53, and thereby plays a role in regulating transcription of TP53 target genes. May also regulate the ubiquitin-mediated proteasomal degradation of other proteins like FANK1 to regulate apoptosis. May be implicated in the regulation of the transcription as a repressor of the transcriptional activity of E4TF1. May bind to DNA. May play a role in the repression of tumor growth and metastasis in breast cancer by down-regulating SRRM3. The protein is RING1 and YY1-binding protein (RYBP) of Homo sapiens (Human).